A 282-amino-acid polypeptide reads, in one-letter code: Lipoyl synthase (282 aa).

[4Fe-4S] cluster is bound by residues Cys37, Cys42, Cys48, Cys63, Cys67, Cys70, and Ser275. Residues 49–264 (WSRGTATFMI…RLVGIEKGFR (216 aa)) form the Radical SAM core domain.

Belongs to the radical SAM superfamily. Lipoyl synthase family. [4Fe-4S] cluster is required as a cofactor.

The protein resides in the cytoplasm. The enzyme catalyses [[Fe-S] cluster scaffold protein carrying a second [4Fe-4S](2+) cluster] + N(6)-octanoyl-L-lysyl-[protein] + 2 oxidized [2Fe-2S]-[ferredoxin] + 2 S-adenosyl-L-methionine + 4 H(+) = [[Fe-S] cluster scaffold protein] + N(6)-[(R)-dihydrolipoyl]-L-lysyl-[protein] + 4 Fe(3+) + 2 hydrogen sulfide + 2 5'-deoxyadenosine + 2 L-methionine + 2 reduced [2Fe-2S]-[ferredoxin]. It participates in protein modification; protein lipoylation via endogenous pathway; protein N(6)-(lipoyl)lysine from octanoyl-[acyl-carrier-protein]: step 2/2. Functionally, catalyzes the radical-mediated insertion of two sulfur atoms into the C-6 and C-8 positions of the octanoyl moiety bound to the lipoyl domains of lipoate-dependent enzymes, thereby converting the octanoylated domains into lipoylated derivatives. The polypeptide is Lipoyl synthase (Porphyromonas gingivalis (strain ATCC BAA-308 / W83)).